The sequence spans 652 residues: MINAQELLTLEDVTVEFTWEEWQLLGPFQKDLYRDVMLEIYSNLLSMGYQVSKPDALSKLERGEEPWTMEDERHSRICPENNEVDDHLQDHLENQRMLKSVEQYHEHNAFGNTASQTKSLCLFRENHDTFELYIKTLKSNLSLVNQNKSCEINNSTKFSGDGKSFLHGNYEELYSAAKFSVSTKANSTKSQVSKHQRTHEIEKNHVCSECGKAFVKKSQLTDHERVHTGEKPYGCTLCAKVFSRKSRLNEHQRIHKREKSFICSECGKVFTMKSRLIEHQRTHTGEKPYICNECGKGFPGKRNLIVHQRNHTGEKSYICSECGKGFTGKSMLIIHQRTHTGEKPYICSECGKGFTTKHYVIIHQRNHTGEKPYICNECGKGFTMKSRMIEHQRTHTGEKPYICSECGKGFPRKSNLIVHQRNHTVEKSYLCSECGKGFTVKSMLIIHQRTHTGEKPYTCSECGKGFPLKSRLIVHQRTHTGEKPYRCSECGKGFIVNSGLMLHQRTHTGEKPYICNECGKGFAFKSNLVVHQRTHTGEKPFMCSECGKGFTMKRYLIVHQQIHTEEKSCICSECGRGFAKETELALHKQVHTGEKPYGCNECGKGFTMKSRLIVHQRTHTGEKPFVCSECRKAFSSKRNLIVHQRTHNGNKP.

In terms of domain architecture, KRAB spans 8–79; it reads LTLEDVTVEF…EDERHSRICP (72 aa). Y41 carries the post-translational modification 3'-nitrotyrosine. 2 positions are modified to ADP-ribosylserine: S139 and S164. C2H2-type zinc fingers lie at residues 205–227, 233–255, 261–283, 289–311, 317–339, 345–367, 373–395, 401–423, 429–451, 457–479, 485–507, 513–535, 541–563, 567–591, 597–619, and 625–647; these read HVCSECGKAFVKKSQLTDHERVH, YGCTLCAKVFSRKSRLNEHQRIH, FICSECGKVFTMKSRLIEHQRTH, YICNECGKGFPGKRNLIVHQRNH, YICSECGKGFTGKSMLIIHQRTH, YICSECGKGFTTKHYVIIHQRNH, YICNECGKGFTMKSRMIEHQRTH, YICSECGKGFPRKSNLIVHQRNH, YLCSECGKGFTVKSMLIIHQRTH, YTCSECGKGFPLKSRLIVHQRTH, YRCSECGKGFIVNSGLMLHQRTH, YICNECGKGFAFKSNLVVHQRTH, FMCSECGKGFTMKRYLIVHQQIH, KSCICSECGRGFAKETELALHKQVH, YGCNECGKGFTMKSRLIVHQRTH, and FVCSECRKAFSSKRNLIVHQRTH. S246 carries the post-translational modification ADP-ribosylserine. Position 330 is an ADP-ribosylserine (S330). S414 carries the ADP-ribosylserine modification.

It belongs to the krueppel C2H2-type zinc-finger protein family. As to quaternary structure, interacts with PARP1 and several chromatin remodeling proteins; the interaction with PARP1 reshapes ZNF432 interacting proteins. Interacts with TRIM28; the interaction is independent of PARP1.

It localises to the nucleus. In terms of biological role, homologous recombination repressor that functions as a poly(ADP-ribose) (PAR) reader regulating DNA damage response and PARP inhibition. Once recruited to DNA lesions via DNA-, in a PAR-dependent mechanism, stimulates PARP1 activity. Binds preferentially ssDNA and inhibits EXO1-mediated resection, probably through a PAR-independent DNA-binding mechanism. This is Zinc finger protein 432 from Homo sapiens (Human).